We begin with the raw amino-acid sequence, 148 residues long: ASCH domain-containing ribonuclease (148 aa).

The ASCH domain maps to 13 to 70 (SLWPEFAKAIVSGKKTVEFRRRIPLPALSARIWIYATRPVKSVIGFAYLEAIVQGDVN).

It depends on Mn(2+) as a cofactor. Ni(2+) serves as cofactor.

In terms of biological role, shows sequence-specific endoribonuclease activity towards single-stranded RNA (ssRNA), with a preference for the bond between pyrimidine and adenine nucleotides. May also have 5'-exonuclease activity. This chain is ASCH domain-containing ribonuclease, found in Zymomonas mobilis subsp. mobilis (strain ATCC 10988 / DSM 424 / LMG 404 / NCIMB 8938 / NRRL B-806 / ZM1).